The sequence spans 720 residues: Polyribonucleotide nucleotidyltransferase (720 aa).

The Mg(2+) site is built by D486 and D492. The region spanning 553 to 612 (PRITVINVPKEKIREVIGTGGKVIREIVEFSGAKIDIEDDGTIKIASTSEESTQKAIDRI) is the KH domain. One can recognise an S1 motif domain in the interval 622–690 (GKIYNGKVVK…DRGKVKLSMR (69 aa)). Residues 698–720 (EDISDKVGPKGGRGGRGEGDLAE) are disordered.

This sequence belongs to the polyribonucleotide nucleotidyltransferase family. Requires Mg(2+) as cofactor.

The protein localises to the cytoplasm. The enzyme catalyses RNA(n+1) + phosphate = RNA(n) + a ribonucleoside 5'-diphosphate. Functionally, involved in mRNA degradation. Catalyzes the phosphorolysis of single-stranded polyribonucleotides processively in the 3'- to 5'-direction. The sequence is that of Polyribonucleotide nucleotidyltransferase from Granulibacter bethesdensis (strain ATCC BAA-1260 / CGDNIH1).